The sequence spans 145 residues: D-aminoacyl-tRNA deacylase (145 aa).

The Gly-cisPro motif, important for rejection of L-amino acids signature appears at 137 to 138 (GP).

The protein belongs to the DTD family. As to quaternary structure, homodimer.

The protein resides in the cytoplasm. The enzyme catalyses glycyl-tRNA(Ala) + H2O = tRNA(Ala) + glycine + H(+). The catalysed reaction is a D-aminoacyl-tRNA + H2O = a tRNA + a D-alpha-amino acid + H(+). In terms of biological role, an aminoacyl-tRNA editing enzyme that deacylates mischarged D-aminoacyl-tRNAs. Also deacylates mischarged glycyl-tRNA(Ala), protecting cells against glycine mischarging by AlaRS. Acts via tRNA-based rather than protein-based catalysis; rejects L-amino acids rather than detecting D-amino acids in the active site. By recycling D-aminoacyl-tRNA to D-amino acids and free tRNA molecules, this enzyme counteracts the toxicity associated with the formation of D-aminoacyl-tRNA entities in vivo and helps enforce protein L-homochirality. This Pectobacterium carotovorum subsp. carotovorum (strain PC1) protein is D-aminoacyl-tRNA deacylase.